The chain runs to 239 residues: Orotidine 5'-phosphate decarboxylase (239 aa).

Residues D15, K37, 64 to 73, T126, R187, Q196, G216, and R217 contribute to the substrate site; that span reads DLKFHDIPNT. Catalysis depends on K66, which acts as the Proton donor.

Belongs to the OMP decarboxylase family. Type 1 subfamily. In terms of assembly, homodimer.

The catalysed reaction is orotidine 5'-phosphate + H(+) = UMP + CO2. Its pathway is pyrimidine metabolism; UMP biosynthesis via de novo pathway; UMP from orotate: step 2/2. Functionally, catalyzes the decarboxylation of orotidine 5'-monophosphate (OMP) to uridine 5'-monophosphate (UMP). This Geobacter metallireducens (strain ATCC 53774 / DSM 7210 / GS-15) protein is Orotidine 5'-phosphate decarboxylase.